Reading from the N-terminus, the 273-residue chain is SPbeta prophage-derived uncharacterized protein YomF (273 aa).

Positions 119-149 (VIETLQGLIDEAEDTIIRMNERIAECERVTK) form a coiled coil.

The polypeptide is SPbeta prophage-derived uncharacterized protein YomF (yomF) (Bacillus subtilis (strain 168)).